The primary structure comprises 210 residues: Large ribosomal subunit protein uL4 (210 aa).

The segment at F56–S80 is disordered.

Belongs to the universal ribosomal protein uL4 family. Part of the 50S ribosomal subunit.

One of the primary rRNA binding proteins, this protein initially binds near the 5'-end of the 23S rRNA. It is important during the early stages of 50S assembly. It makes multiple contacts with different domains of the 23S rRNA in the assembled 50S subunit and ribosome. Its function is as follows. Forms part of the polypeptide exit tunnel. This chain is Large ribosomal subunit protein uL4, found in Solidesulfovibrio magneticus (strain ATCC 700980 / DSM 13731 / RS-1) (Desulfovibrio magneticus).